The sequence spans 130 residues: Small ribosomal subunit protein uS9 (130 aa).

This sequence belongs to the universal ribosomal protein uS9 family.

The protein is Small ribosomal subunit protein uS9 of Bordetella pertussis (strain Tohama I / ATCC BAA-589 / NCTC 13251).